The primary structure comprises 498 residues: ATP synthase subunit beta, chloroplastic (498 aa).

172-179 is an ATP binding site; sequence GGAGVGKT.

The protein belongs to the ATPase alpha/beta chains family. As to quaternary structure, F-type ATPases have 2 components, CF(1) - the catalytic core - and CF(0) - the membrane proton channel. CF(1) has five subunits: alpha(3), beta(3), gamma(1), delta(1), epsilon(1). CF(0) has four main subunits: a(1), b(1), b'(1) and c(9-12).

The protein resides in the plastid. The protein localises to the chloroplast thylakoid membrane. It carries out the reaction ATP + H2O + 4 H(+)(in) = ADP + phosphate + 5 H(+)(out). Functionally, produces ATP from ADP in the presence of a proton gradient across the membrane. The catalytic sites are hosted primarily by the beta subunits. In Citrus sinensis (Sweet orange), this protein is ATP synthase subunit beta, chloroplastic.